The sequence spans 181 residues: MKKFKCVVCGYIYTGEDAPEKCPVCGAGKDKFVEVKDEGEGWADEHKIGVAKGVDKEVLEGLRANFTGECTEVGMYLAMARQADREGYPEVAEAYKRIAFEEAEHASKFAELLGEVVVADTKTNLQMRVDAEKGACEGKKELATLAKKLNYDAIHDTVHEMCKDEARHGSAFRGLLNRYFK.

Positions 1–35 (MKKFKCVVCGYIYTGEDAPEKCPVCGAGKDKFVEV) constitute a Rubredoxin-like domain. Fe cation contacts are provided by C6, C9, C22, C25, E69, E102, E132, E165, and H168. One can recognise a Ferritin-like diiron domain in the interval 52 to 181 (KGVDKEVLEG…FRGLLNRYFK (130 aa)).

In terms of assembly, homodimer. It depends on Fe(3+) as a cofactor.

The enzyme catalyses H2O2 + NADH + H(+) = NAD(+) + 2 H2O. Functions as the terminal component of an NADH peroxidase (NADH:H(2)O(2) oxidoreductase) when using NADH:rubredoxin oxidoreductase (NROR) and rubredoxin (Rd) as electron transport intermediaries from NADH to revRbr 1. Plays an important role in the oxidative stress defense system in C.acetobutylicum, an obligate anaerobic bacterium. Also exhibits NADH oxidase (NADH:O(2) oxidoreductase) activity in vitro, which is 100-fold lesser than that of FprA1/2 using the same electron transfer components. Therefore, its predominant function is most likely as a scavenger of its preferred substrate, H(2)O(2). The polypeptide is Reverse rubrerythrin-1 (rbr3A) (Clostridium acetobutylicum (strain ATCC 824 / DSM 792 / JCM 1419 / IAM 19013 / LMG 5710 / NBRC 13948 / NRRL B-527 / VKM B-1787 / 2291 / W)).